The chain runs to 431 residues: Probable sodium/metabolite cotransporter BASS3, chloroplastic (431 aa).

The transit peptide at 1–70 directs the protein to the chloroplast; sequence MTLIASLSLP…RRNSGLVPVV (70 aa). 9 helical membrane passes run 110–130, 145–165, 169–189, 198–218, 238–258, 261–281, 288–308, 325–345, and 387–407; these read FWSA…LSYP, LGGI…ALAF, VPLS…GVLV, TFYA…SSYA, IASV…VVPV, VAMS…GLVL, VVTL…SLCI, LGLI…GYWF, and VPAA…ASFW.

Belongs to the bile acid:sodium symporter (BASS) (TC 2.A.28) family.

It is found in the membrane. The protein localises to the plastid. The protein resides in the chloroplast envelope. In terms of biological role, may function as sodium-coupled metabolite transporter across the chloroplast envelope. This Arabidopsis thaliana (Mouse-ear cress) protein is Probable sodium/metabolite cotransporter BASS3, chloroplastic (BASS3).